We begin with the raw amino-acid sequence, 160 residues long: 2-C-methyl-D-erythritol 2,4-cyclodiphosphate synthase (160 aa).

The a divalent metal cation site is built by Asp-9 and His-11. Residues 9–11 (DVH) and 35–36 (HS) contribute to the 4-CDP-2-C-methyl-D-erythritol 2-phosphate site. Residue His-43 participates in a divalent metal cation binding. 4-CDP-2-C-methyl-D-erythritol 2-phosphate is bound by residues 57-59 (DIG), 62-66 (FPDTD), 133-136 (TTTE), Phe-140, and Arg-143.

This sequence belongs to the IspF family. In terms of assembly, homotrimer. A divalent metal cation serves as cofactor.

The enzyme catalyses 4-CDP-2-C-methyl-D-erythritol 2-phosphate = 2-C-methyl-D-erythritol 2,4-cyclic diphosphate + CMP. Its pathway is isoprenoid biosynthesis; isopentenyl diphosphate biosynthesis via DXP pathway; isopentenyl diphosphate from 1-deoxy-D-xylulose 5-phosphate: step 4/6. In terms of biological role, involved in the biosynthesis of isopentenyl diphosphate (IPP) and dimethylallyl diphosphate (DMAPP), two major building blocks of isoprenoid compounds. Catalyzes the conversion of 4-diphosphocytidyl-2-C-methyl-D-erythritol 2-phosphate (CDP-ME2P) to 2-C-methyl-D-erythritol 2,4-cyclodiphosphate (ME-CPP) with a corresponding release of cytidine 5-monophosphate (CMP). The sequence is that of 2-C-methyl-D-erythritol 2,4-cyclodiphosphate synthase from Haemophilus ducreyi (strain 35000HP / ATCC 700724).